The sequence spans 150 residues: Macrodomain Ter protein (150 aa).

Belongs to the MatP family. As to quaternary structure, homodimer.

The protein resides in the cytoplasm. Required for spatial organization of the terminus region of the chromosome (Ter macrodomain) during the cell cycle. Prevents early segregation of duplicated Ter macrodomains during cell division. Binds specifically to matS, which is a 13 bp signature motif repeated within the Ter macrodomain. In Escherichia coli (strain SMS-3-5 / SECEC), this protein is Macrodomain Ter protein.